The sequence spans 349 residues: Methylthioribose-1-phosphate isomerase (349 aa).

Substrate-binding positions include arginine 51–alanine 53, arginine 94, and glutamine 199. Aspartate 240 functions as the Proton donor in the catalytic mechanism. Asparagine 250 to lysine 251 contributes to the substrate binding site.

The protein belongs to the eIF-2B alpha/beta/delta subunits family. MtnA subfamily. In terms of assembly, homodimer.

The catalysed reaction is 5-(methylsulfanyl)-alpha-D-ribose 1-phosphate = 5-(methylsulfanyl)-D-ribulose 1-phosphate. The protein operates within amino-acid biosynthesis; L-methionine biosynthesis via salvage pathway; L-methionine from S-methyl-5-thio-alpha-D-ribose 1-phosphate: step 1/6. In terms of biological role, catalyzes the interconversion of methylthioribose-1-phosphate (MTR-1-P) into methylthioribulose-1-phosphate (MTRu-1-P). The chain is Methylthioribose-1-phosphate isomerase from Bacillus cytotoxicus (strain DSM 22905 / CIP 110041 / 391-98 / NVH 391-98).